A 1071-amino-acid chain; its full sequence is ATP-dependent helicase/deoxyribonuclease subunit B (1071 aa).

It belongs to the helicase family. AddB/RexB type 2 subfamily. Heterodimer of AddA and RexB. Mg(2+) serves as cofactor.

The heterodimer acts as both an ATP-dependent DNA helicase and an ATP-dependent, dual-direction single-stranded exonuclease. Recognizes the chi site generating a DNA molecule suitable for the initiation of homologous recombination. This subunit has 5' -&gt; 3' nuclease activity but not helicase activity. This Streptococcus pyogenes serotype M12 (strain MGAS2096) protein is ATP-dependent helicase/deoxyribonuclease subunit B.